Reading from the N-terminus, the 187-residue chain is MRTFIAIDVNEEVKKQASEIIEKLMKRGFGATWVSEENMHLTLFFLGEVDEQKISEIAEHLCRRVRGFPSFSFTVKGFGYFKRKMSPRVFWLGVENTDRLMKLYEELRNELSHHGFSFEEKFVPHITIGRVKYYPDKWEKLIEDIDFPPIEVAVDRFKIYSSTLTPTGPIYKVLYECQFEGGLIRYA.

His-40 acts as the Proton donor in catalysis. 2 consecutive short sequence motifs (HXTX) follow at residues 40-43 (HLTL) and 125-128 (HITI). His-125 (proton acceptor) is an active-site residue.

This sequence belongs to the 2H phosphoesterase superfamily. ThpR family.

It catalyses the reaction a 3'-end 2',3'-cyclophospho-ribonucleotide-RNA + H2O = a 3'-end 2'-phospho-ribonucleotide-RNA + H(+). In terms of biological role, hydrolyzes RNA 2',3'-cyclic phosphodiester to an RNA 2'-phosphomonoester. The polypeptide is RNA 2',3'-cyclic phosphodiesterase (Thermotoga maritima (strain ATCC 43589 / DSM 3109 / JCM 10099 / NBRC 100826 / MSB8)).